The primary structure comprises 441 residues: L-seryl-tRNA(Sec) selenium transferase (441 aa).

Residue lysine 283 is modified to N6-(pyridoxal phosphate)lysine.

This sequence belongs to the SelA family. Requires pyridoxal 5'-phosphate as cofactor.

It localises to the cytoplasm. It catalyses the reaction L-seryl-tRNA(Sec) + selenophosphate + H(+) = L-selenocysteinyl-tRNA(Sec) + phosphate. It participates in aminoacyl-tRNA biosynthesis; selenocysteinyl-tRNA(Sec) biosynthesis; selenocysteinyl-tRNA(Sec) from L-seryl-tRNA(Sec) (bacterial route): step 1/1. Functionally, converts seryl-tRNA(Sec) to selenocysteinyl-tRNA(Sec) required for selenoprotein biosynthesis. The chain is L-seryl-tRNA(Sec) selenium transferase from Campylobacter concisus (strain 13826).